Consider the following 156-residue polypeptide: Transcription factor E (156 aa).

The HTH TFE/IIEalpha-type domain maps to 1-72 (MYGEKAKKVL…LWILNIDQIE (72 aa)).

The protein belongs to the TFE family. As to quaternary structure, monomer. Interaction with RNA polymerase subunits RpoF and RpoE is necessary for Tfe stimulatory transcription activity. Able to interact with Tbp and RNA polymerase in the absence of DNA promoter. Interacts both with the preinitiation and elongation complexes.

Its function is as follows. Transcription factor that plays a role in the activation of archaeal genes transcribed by RNA polymerase. Facilitates transcription initiation by enhancing TATA-box recognition by TATA-box-binding protein (Tbp), and transcription factor B (Tfb) and RNA polymerase recruitment. Not absolutely required for transcription in vitro, but particularly important in cases where Tbp or Tfb function is not optimal. It dynamically alters the nucleic acid-binding properties of RNA polymerases by stabilizing the initiation complex and destabilizing elongation complexes. Seems to translocate with the RNA polymerase following initiation and acts by binding to the non template strand of the transcription bubble in elongation complexes. The protein is Transcription factor E of Staphylothermus marinus (strain ATCC 43588 / DSM 3639 / JCM 9404 / F1).